The following is a 382-amino-acid chain: MYIAGVMSGTSLDGIDVALVHIEGSGVDSKIELIHFTTVPFCNDMKNEIQQALSIETSNVQLICSLNFKLGLCFANAVKEVCKEANFPLRQLDLIGSHGQTIYHQPKQEGNIISSTLQIGEPAVIAYETNTTVISNFRTMDMAAGGQGAPLVPYSEIILYRHQTKNRLLQNIGGIGNVTVVPSKRSNESVIAFDTGPGNMIIDEVCQRLFQLSYDQNGKIAKQGVVVDEILTYCMNHPFLNVKPPKSTGREQFGEAFVTELLNRFEKHSRENILATVTMFTASSIVHHYQEFIFPYYEIDEVILGGGGSYNRTLVEMIRFGLKEEKCKIFTQEDLGYSSAAKEAIAFAILANETYHRNPSNVPSATGAKQSVVLGNITFPPI.

9–16 (GTSLDGID) is an ATP binding site.

This sequence belongs to the anhydro-N-acetylmuramic acid kinase family.

It catalyses the reaction 1,6-anhydro-N-acetyl-beta-muramate + ATP + H2O = N-acetyl-D-muramate 6-phosphate + ADP + H(+). The protein operates within amino-sugar metabolism; 1,6-anhydro-N-acetylmuramate degradation. It functions in the pathway cell wall biogenesis; peptidoglycan recycling. Catalyzes the specific phosphorylation of 1,6-anhydro-N-acetylmuramic acid (anhMurNAc) with the simultaneous cleavage of the 1,6-anhydro ring, generating MurNAc-6-P. Is required for the utilization of anhMurNAc either imported from the medium or derived from its own cell wall murein, and thus plays a role in cell wall recycling. The chain is Anhydro-N-acetylmuramic acid kinase from Bacillus cereus (strain G9842).